Here is a 535-residue protein sequence, read N- to C-terminus: Arylsulfatase G (535 aa).

Positions 1 to 18 are cleaved as a signal peptide; sequence MGWLFLKVLFLGVTFLGC. Residues Asp-44, Asp-45, and Cys-84 each contribute to the Ca(2+) site. Cys-84 (nucleophile) is an active-site residue. Cys-84 is subject to 3-oxoalanine (Cys). The N-linked (GlcNAc...) asparagine glycan is linked to Asn-117. Lys-137 is a substrate binding site. The active site involves His-139. Ser-162 contributes to the substrate binding site. The N-linked (GlcNAc...) asparagine glycan is linked to Asn-215. His-251 serves as a coordination point for substrate. The Ca(2+) site is built by Asp-302 and Asn-303. N-linked (GlcNAc...) asparagine glycans are attached at residues Asn-356 and Asn-497.

Belongs to the sulfatase family. Ca(2+) is required as a cofactor. Post-translationally, N-glycosylated with both high mannose and complex type sugars. The conversion to 3-oxoalanine (also known as C-formylglycine, FGly), of a serine or cysteine residue in prokaryotes and of a cysteine residue in eukaryotes, is critical for catalytic activity. In terms of processing, the 63-kDa precursor undergoes proteolytic processing in two steps, yielding two fragments in the first step (apparent molecular masses of 44 and 18 kDa). In the second step, the 44-kDa fragment is processed further to the 34- and 10-kDa chains. The 10-kDa chain is a cleavage product of the 44-kDa fragment but linked to the 18-kDa chain through a disulfide bridge.

It localises to the lysosome. It carries out the reaction an aryl sulfate + H2O = a phenol + sulfate + H(+). The catalysed reaction is Hydrolysis of the 3-sulfate groups of the N-sulfo-D-glucosamine 3-O-sulfate units of heparin.. Functionally, displays arylsulfatase activity with pseudosubstrates at acidic pH, such as p-nitrocatechol sulfate. Catalyzes the hydrolysis of the 3-sulfate groups of the N-sulfo-D-glucosamine 3-O-sulfate units of heparin. The chain is Arylsulfatase G (ARSG) from Canis lupus familiaris (Dog).